The chain runs to 355 residues: UDP-N-acetylglucosamine--N-acetylmuramyl-(pentapeptide) pyrophosphoryl-undecaprenol N-acetylglucosamine transferase (355 aa).

UDP-N-acetyl-alpha-D-glucosamine-binding positions include 14–16 (SGG), N126, R162, S190, I243, 262–267 (ALTVSE), and Q288.

Belongs to the glycosyltransferase 28 family. MurG subfamily.

It localises to the cell inner membrane. The enzyme catalyses di-trans,octa-cis-undecaprenyl diphospho-N-acetyl-alpha-D-muramoyl-L-alanyl-D-glutamyl-meso-2,6-diaminopimeloyl-D-alanyl-D-alanine + UDP-N-acetyl-alpha-D-glucosamine = di-trans,octa-cis-undecaprenyl diphospho-[N-acetyl-alpha-D-glucosaminyl-(1-&gt;4)]-N-acetyl-alpha-D-muramoyl-L-alanyl-D-glutamyl-meso-2,6-diaminopimeloyl-D-alanyl-D-alanine + UDP + H(+). The protein operates within cell wall biogenesis; peptidoglycan biosynthesis. Functionally, cell wall formation. Catalyzes the transfer of a GlcNAc subunit on undecaprenyl-pyrophosphoryl-MurNAc-pentapeptide (lipid intermediate I) to form undecaprenyl-pyrophosphoryl-MurNAc-(pentapeptide)GlcNAc (lipid intermediate II). The sequence is that of UDP-N-acetylglucosamine--N-acetylmuramyl-(pentapeptide) pyrophosphoryl-undecaprenol N-acetylglucosamine transferase from Blochmanniella pennsylvanica (strain BPEN).